The sequence spans 134 residues: Secretin (134 aa).

An N-terminal signal peptide occupies residues 1-21 (MATRALLLLLLLPPLLLLAGC). Residues 22 to 31 (AARPAPPRAP) constitute a propeptide that is removed on maturation. V59 bears the Valine amide mark. Phosphoserine is present on S63. The propeptide occupies 63-134 (SQQDPENNTA…PAAEGSPMPP (72 aa)).

This sequence belongs to the glucagon family.

The protein localises to the secreted. Functionally, hormone involved in different processes, such as regulation of the pH of the duodenal content, food intake and water homeostasis. Exerts its biological effects by binding to secretin receptor (SCTR), a G-protein coupled receptor expressed in the basolateral domain of several cells. Acts as a key gastrointestinal hormone by regulating the pH of the duodenal content. Secreted by S cells of the duodenum in the crypts of Lieberkuehn and regulates the pH of the duodenum by (1) inhibiting the secretion of gastric acid from the parietal cells of the stomach and (2) stimulating the production of bicarbonate (NaHCO(3)) from the ductal cells of the pancreas. Production of bicarbonate is essential to neutralize the pH and ensure no damage is done to the small intestine by the gastric acid. In addition to regulating the pH of the duodenal content, plays a central role in diet induced thermogenesis: acts as a non-sympathetic brown fat (BAT) activator mediating prandial thermogenesis, which consequentially induces satiation. Mechanistically, secretin released by the gut after a meal binds to secretin receptor (SCTR) in brown adipocytes, activating brown fat thermogenesis by stimulating lipolysis, which is sensed in the brain and promotes satiation. Also able to stimulate lipolysis in white adipocytes. Also plays an important role in cellular osmoregulation: released into the systemic circulation in response to hyperosmolality and acts at different levels in the hypothalamus, pituitary and kidney to regulate water homeostasis. Also plays a role in the central nervous system, possibly by acting as a neuropeptide hormone: required for hippocampal synaptic function and neural progenitor cells maintenance. The chain is Secretin from Sus scrofa (Pig).